A 393-amino-acid polypeptide reads, in one-letter code: SH3 domain-binding protein 5-like (393 aa).

Residues 1–58 are disordered; that stretch reads MAELRQVPGGRETPQGELRPEVVEDEVPRSPVAEEPGGGGSSSSEAKLSPREEEELDP. Residue Thr-13 is modified to Phosphothreonine. Residues 18 to 28 show a composition bias toward basic and acidic residues; that stretch reads LRPEVVEDEVP. Residues Ser-30 and Ser-49 each carry the phosphoserine modification. Coiled-coil stretches lie at residues 59–140 and 169–272; these read RIQE…YERA and WQEM…EQIH. A disordered region spans residues 273–332; that stretch reads ARRRGGLPPHPLGPRRSSPVGAEAGPEDMEDGDSGIEGAEGAGLEEGSSLGPGPAPDTDT. Residues 297 to 306 show a composition bias toward acidic residues; that stretch reads GPEDMEDGDS. The segment covering 317–332 has biased composition (low complexity); sequence EEGSSLGPGPAPDTDT. Residues Ser-343, Ser-350, Ser-358, Ser-362, and Ser-378 each carry the phosphoserine modification. Residues 362–393 are disordered; it reads SLDGQELGTRSGGRRGSDGGARGGRHQRSVSL. The span at 384–393 shows a compositional bias: basic residues; the sequence is GGRHQRSVSL.

The protein belongs to the SH3BP5 family.

Functions as a guanine nucleotide exchange factor (GEF) for RAB11A. The sequence is that of SH3 domain-binding protein 5-like (SH3BP5L) from Homo sapiens (Human).